A 425-amino-acid polypeptide reads, in one-letter code: Histidine--tRNA ligase (425 aa).

It belongs to the class-II aminoacyl-tRNA synthetase family. As to quaternary structure, homodimer.

Its subcellular location is the cytoplasm. The enzyme catalyses tRNA(His) + L-histidine + ATP = L-histidyl-tRNA(His) + AMP + diphosphate + H(+). The protein is Histidine--tRNA ligase of Chlorobium chlorochromatii (strain CaD3).